Reading from the N-terminus, the 232-residue chain is Small ribosomal subunit protein uS5 (232 aa).

A disordered region spans residues 1 to 47; the sequence is MAAEVTETAQPVETAASTDNNREQREPRRGGRERNPNRDRGNRDADK. Residues 7 to 19 are compositionally biased toward polar residues; the sequence is ETAQPVETAASTD. Basic and acidic residues predominate over residues 20 to 47; that stretch reads NNREQREPRRGGRERNPNRDRGNRDADK. Residues 50 to 113 enclose the S5 DRBM domain; the sequence is FLERVVTINR…EEAKKNFFRV (64 aa).

Belongs to the universal ribosomal protein uS5 family. In terms of assembly, part of the 30S ribosomal subunit. Contacts proteins S4 and S8.

Functionally, with S4 and S12 plays an important role in translational accuracy. In terms of biological role, located at the back of the 30S subunit body where it stabilizes the conformation of the head with respect to the body. The sequence is that of Small ribosomal subunit protein uS5 from Leifsonia xyli subsp. xyli (strain CTCB07).